Consider the following 115-residue polypeptide: MNMALTLFTNTALASLLVLIAFWLPQLNTYSEKASPYECGFDPMGSARLPFSMKFFLVAITFLLFDLEIALLLPLPWASHTDNLTTMLTMALLLISLLAASLAYEWTEKGLEWTE.

3 helical membrane-spanning segments follow: residues 4–24, 55–75, and 84–104; these read ALTL…AFWL, FFLV…LLPL, and LTTM…SLAY.

Belongs to the complex I subunit 3 family. As to quaternary structure, core subunit of respiratory chain NADH dehydrogenase (Complex I) which is composed of 45 different subunits. Interacts with TMEM186. Interacts with TMEM242.

The protein resides in the mitochondrion inner membrane. It catalyses the reaction a ubiquinone + NADH + 5 H(+)(in) = a ubiquinol + NAD(+) + 4 H(+)(out). In terms of biological role, core subunit of the mitochondrial membrane respiratory chain NADH dehydrogenase (Complex I) which catalyzes electron transfer from NADH through the respiratory chain, using ubiquinone as an electron acceptor. Essential for the catalytic activity of complex I. The sequence is that of NADH-ubiquinone oxidoreductase chain 3 from Phoca vitulina (Harbor seal).